We begin with the raw amino-acid sequence, 205 residues long: Holliday junction branch migration complex subunit RuvA (205 aa).

A domain I region spans residues M1–R64. Residues S65–V143 are domain II. The flexible linker stretch occupies residues H144–A154. Residues A154–K205 are domain III.

Belongs to the RuvA family. As to quaternary structure, homotetramer. Forms an RuvA(8)-RuvB(12)-Holliday junction (HJ) complex. HJ DNA is sandwiched between 2 RuvA tetramers; dsDNA enters through RuvA and exits via RuvB. An RuvB hexamer assembles on each DNA strand where it exits the tetramer. Each RuvB hexamer is contacted by two RuvA subunits (via domain III) on 2 adjacent RuvB subunits; this complex drives branch migration. In the full resolvosome a probable DNA-RuvA(4)-RuvB(12)-RuvC(2) complex forms which resolves the HJ.

The protein resides in the cytoplasm. In terms of biological role, the RuvA-RuvB-RuvC complex processes Holliday junction (HJ) DNA during genetic recombination and DNA repair, while the RuvA-RuvB complex plays an important role in the rescue of blocked DNA replication forks via replication fork reversal (RFR). RuvA specifically binds to HJ cruciform DNA, conferring on it an open structure. The RuvB hexamer acts as an ATP-dependent pump, pulling dsDNA into and through the RuvAB complex. HJ branch migration allows RuvC to scan DNA until it finds its consensus sequence, where it cleaves and resolves the cruciform DNA. The sequence is that of Holliday junction branch migration complex subunit RuvA from Afipia carboxidovorans (strain ATCC 49405 / DSM 1227 / KCTC 32145 / OM5) (Oligotropha carboxidovorans).